The following is an 86-amino-acid chain: Omega-theraphotoxin-Hhn1d (86 aa).

The N-terminal stretch at 1 to 21 is a signal peptide; sequence MKSIVFVALFGLALLAVVCSA. Positions 22 to 50 are excised as a propeptide; the sequence is SEDAHKELLKEVVRAMVVDKTDAVQAEER. 3 cysteine pairs are disulfide-bonded: C52–C66, C59–C71, and C65–C78.

This sequence belongs to the neurotoxin 10 (Hwtx-1) family. 17 (Hntx-9) subfamily. As to expression, expressed by the venom gland.

The protein resides in the secreted. Its function is as follows. Ion channel inhibitor. This is Omega-theraphotoxin-Hhn1d from Cyriopagopus hainanus (Chinese bird spider).